Consider the following 263-residue polypeptide: Large ribosomal subunit protein uL29m (263 aa).

Disordered stretches follow at residues 51-92 (ARVT…EELP) and 208-263 (PEID…APRV). Basic and acidic residues predominate over residues 53 to 66 (VTRDNSKQRGESAL). Residues 214–223 (NPENPYTPST) are compositionally biased toward polar residues. Residues 233 to 245 (GAEASETQSTTTE) are compositionally biased toward low complexity. Residues 246-257 (IDPTTIPSSKSQ) are compositionally biased toward polar residues.

The protein belongs to the universal ribosomal protein uL29 family. Component of the mitochondrial large ribosomal subunit (mt-LSU). Mature N.crassa 74S mitochondrial ribosomes consist of a small (37S) and a large (54S) subunit. The 37S small subunit contains a 16S ribosomal RNA (16S mt-rRNA) and 32 different proteins. The 54S large subunit contains a 23S rRNA (23S mt-rRNA) and 42 different proteins.

It localises to the mitochondrion. In terms of biological role, component of the mitochondrial ribosome (mitoribosome), a dedicated translation machinery responsible for the synthesis of mitochondrial genome-encoded proteins, including at least some of the essential transmembrane subunits of the mitochondrial respiratory chain. The mitoribosomes are attached to the mitochondrial inner membrane and translation products are cotranslationally integrated into the membrane. This chain is Large ribosomal subunit protein uL29m (mrpl4), found in Neurospora crassa (strain ATCC 24698 / 74-OR23-1A / CBS 708.71 / DSM 1257 / FGSC 987).